The chain runs to 450 residues: Ribulose bisphosphate carboxylase large chain (450 aa).

Lysine 4 is subject to N6,N6,N6-trimethyllysine. Positions 113 and 163 each coordinate substrate. Lysine 165 functions as the Proton acceptor in the catalytic mechanism. Lysine 167 contacts substrate. Residues lysine 191, aspartate 193, and glutamate 194 each coordinate Mg(2+). N6-carboxylysine is present on lysine 191. Histidine 284 (proton acceptor) is an active-site residue. Residues arginine 285, histidine 317, and serine 369 each contribute to the substrate site.

It belongs to the RuBisCO large chain family. Type I subfamily. In terms of assembly, heterohexadecamer of 8 large chains and 8 small chains; disulfide-linked. The disulfide link is formed within the large subunit homodimers. The cofactor is Mg(2+). In terms of processing, the disulfide bond which can form in the large chain dimeric partners within the hexadecamer appears to be associated with oxidative stress and protein turnover.

Its subcellular location is the plastid. The protein localises to the chloroplast. The enzyme catalyses 2 (2R)-3-phosphoglycerate + 2 H(+) = D-ribulose 1,5-bisphosphate + CO2 + H2O. The catalysed reaction is D-ribulose 1,5-bisphosphate + O2 = 2-phosphoglycolate + (2R)-3-phosphoglycerate + 2 H(+). Its function is as follows. RuBisCO catalyzes two reactions: the carboxylation of D-ribulose 1,5-bisphosphate, the primary event in carbon dioxide fixation, as well as the oxidative fragmentation of the pentose substrate in the photorespiration process. Both reactions occur simultaneously and in competition at the same active site. This is Ribulose bisphosphate carboxylase large chain from Sedum rubrotinctum (Jelly bean plant).